Consider the following 303-residue polypeptide: Coenzyme PQQ synthesis protein B (303 aa).

It belongs to the PqqB family.

Its pathway is cofactor biosynthesis; pyrroloquinoline quinone biosynthesis. Functionally, may be involved in the transport of PQQ or its precursor to the periplasm. The polypeptide is Coenzyme PQQ synthesis protein B (Acinetobacter baumannii (strain ACICU)).